The following is a 117-amino-acid chain: MTRIRRGYIARRRRTKIRLFASTFRGAHSRLTRTTTQQKMRALVSAHRDRGRQKRNFRRLWITRINAVIRENKVSYSYSRLIHDLYKRQLLLNRKILAQIAISNRNCLYMISNEIIK.

Belongs to the bacterial ribosomal protein bL20 family.

The protein localises to the plastid. It is found in the chloroplast. Functionally, binds directly to 23S ribosomal RNA and is necessary for the in vitro assembly process of the 50S ribosomal subunit. It is not involved in the protein synthesizing functions of that subunit. In Platanus occidentalis (Sycamore), this protein is Large ribosomal subunit protein bL20c.